A 445-amino-acid polypeptide reads, in one-letter code: Chromosomal replication initiator protein DnaA (445 aa).

The interval 1 to 73 is domain I, interacts with DnaA modulators; it reads MSTHLTETWE…VNALKLLTSK (73 aa). Positions 73 to 106 are domain II; that stretch reads KKYNIDFIVTTEEKIEKNHNNEKSNIVVNDEMST. Positions 107–323 are domain III, AAA+ region; it reads MLNPKYTFDS…GALIRIVAFS (217 aa). Residues Gly-151, Gly-153, Lys-154, and Thr-155 each coordinate ATP. Residues 324-445 form a domain IV, binds dsDNA region; that stretch reads SLTNKEISVD…NDLNKRINQK (122 aa).

The protein belongs to the DnaA family. In terms of assembly, oligomerizes as a right-handed, spiral filament on DNA at oriC.

It is found in the cytoplasm. Functionally, plays an essential role in the initiation and regulation of chromosomal replication. ATP-DnaA binds to the origin of replication (oriC) to initiate formation of the DNA replication initiation complex once per cell cycle. Binds the DnaA box (a 9 base pair repeat at the origin) and separates the double-stranded (ds)DNA. Forms a right-handed helical filament on oriC DNA; dsDNA binds to the exterior of the filament while single-stranded (ss)DNA is stabiized in the filament's interior. The ATP-DnaA-oriC complex binds and stabilizes one strand of the AT-rich DNA unwinding element (DUE), permitting loading of DNA polymerase. After initiation quickly degrades to an ADP-DnaA complex that is not apt for DNA replication. Binds acidic phospholipids. In Clostridium botulinum (strain Loch Maree / Type A3), this protein is Chromosomal replication initiator protein DnaA.